Reading from the N-terminus, the 270-residue chain is Tryptophan synthase alpha chain (270 aa).

Active-site proton acceptor residues include E49 and D60.

The protein belongs to the TrpA family. As to quaternary structure, tetramer of two alpha and two beta chains.

It catalyses the reaction (1S,2R)-1-C-(indol-3-yl)glycerol 3-phosphate + L-serine = D-glyceraldehyde 3-phosphate + L-tryptophan + H2O. The protein operates within amino-acid biosynthesis; L-tryptophan biosynthesis; L-tryptophan from chorismate: step 5/5. In terms of biological role, the alpha subunit is responsible for the aldol cleavage of indoleglycerol phosphate to indole and glyceraldehyde 3-phosphate. This is Tryptophan synthase alpha chain from Pseudomonas fluorescens (strain ATCC BAA-477 / NRRL B-23932 / Pf-5).